We begin with the raw amino-acid sequence, 519 residues long: Glutamate--cysteine ligase (519 aa).

This sequence belongs to the glutamate--cysteine ligase type 1 family. Type 1 subfamily.

It carries out the reaction L-cysteine + L-glutamate + ATP = gamma-L-glutamyl-L-cysteine + ADP + phosphate + H(+). It participates in sulfur metabolism; glutathione biosynthesis; glutathione from L-cysteine and L-glutamate: step 1/2. The polypeptide is Glutamate--cysteine ligase (Edwardsiella ictaluri (strain 93-146)).